The following is a 923-amino-acid chain: Rap guanine nucleotide exchange factor 3 (923 aa).

Ser-79 is subject to Phosphoserine. The 77-residue stretch at 110-186 folds into the DEP domain; it reads ATCPNLIRDR…RDAQFYRFPG (77 aa). The tract at residues 218 to 242 is interaction with PDE3B; sequence TVALRKPPGQRTDEELDLIFEELLH. 3',5'-cyclic AMP-binding positions include 311 to 314 and 321 to 322; these read GQLA and RA. The 135-residue stretch at 384–518 folds into the N-terminal Ras-GEF domain; sequence NRYTVMSGTP…EQWPERRRCH (135 aa). An interaction with PDE3B region spans residues 398–422; sequence ELLLEAMGPDSSAHDPTETFLSDFL. Residues Ser-528 and Ser-864 each carry the phosphoserine modification. The Ras-GEF domain occupies 662–889; the sequence is SAKDLAGQLT…ARISTCSEQS (228 aa).

As to quaternary structure, interacts with PDE3B and PIK3R6; form a signaling complex that regulates phosphatidylinositol 3-kinase gamma in angiogenesis. Widely expressed with highest levels in adult kidney, heart, thyroid and brain, and fetal kidney.

The protein localises to the endomembrane system. In terms of biological role, guanine nucleotide exchange factor (GEF) for RAP1A and RAP2A small GTPases that is activated by binding cAMP. Through simultaneous binding of PDE3B to RAPGEF3 and PIK3R6 is assembled in a signaling complex in which it activates the PI3K gamma complex and which is involved in angiogenesis. Plays a role in the modulation of the cAMP-induced dynamic control of endothelial barrier function through a pathway that is independent on Rho-mediated signaling. Required for the actin rearrangement at cell-cell junctions, such as stress fibers and junctional actin. The polypeptide is Rap guanine nucleotide exchange factor 3 (RAPGEF3) (Homo sapiens (Human)).